We begin with the raw amino-acid sequence, 307 residues long: Cytochrome c1 2, heme protein, mitochondrial (307 aa).

A mitochondrion-targeting transit peptide spans 1–64; it reads MVGGGVIRQL…LLSFSTVASA (64 aa). Topologically, residues 65–270 are mitochondrial intermembrane; it reads DEAEHGLECP…EPEMEERKLM (206 aa). In terms of domain architecture, Cytochrome c spans 90 to 197; it reads ASIRRGHQVY…NGQNYVFALL (108 aa). Cys103, Cys106, His107, and Met226 together coordinate heme c. A helical transmembrane segment spans residues 271–288; it reads GFKWIFLLSLALLQAAYY. Over 289 to 307 the chain is Mitochondrial matrix; the sequence is RRLKWSVLKSRKLVLDVVN.

Belongs to the cytochrome c family. Component of the ubiquinol-cytochrome c oxidoreductase (cytochrome b-c1 complex, complex III, CIII), a multisubunit enzyme composed of 10 subunits. The complex is composed of 3 respiratory subunits cytochrome b (MT-CYB), cytochrome c1 (CYC1-1 or CYC1-2) and Rieske protein (UCR1-1 or UCR1-2), 2 core protein subunits MPPalpha1 (or MPPalpha2) and MPPB, and 5 low-molecular weight protein subunits QCR7-1 (or QCR7-2), UCRQ-1 (or UCRQ-2), QCR9, UCRY and probably QCR6-1 (or QCR6-2). The complex exists as an obligatory dimer and forms supercomplexes (SCs) in the inner mitochondrial membrane with NADH-ubiquinone oxidoreductase (complex I, CI), resulting in different assemblies (supercomplexes SCI(1)III(2) and SCI(2)III(4)). In terms of processing, binds 1 heme c group covalently per subunit.

Its subcellular location is the mitochondrion inner membrane. Component of the ubiquinol-cytochrome c oxidoreductase, a multisubunit transmembrane complex that is part of the mitochondrial electron transport chain which drives oxidative phosphorylation. The respiratory chain contains 3 multisubunit complexes succinate dehydrogenase (complex II, CII), ubiquinol-cytochrome c oxidoreductase (cytochrome b-c1 complex, complex III, CIII) and cytochrome c oxidase (complex IV, CIV), that cooperate to transfer electrons derived from NADH and succinate to molecular oxygen, creating an electrochemical gradient over the inner membrane that drives transmembrane transport and the ATP synthase. The cytochrome b-c1 complex catalyzes electron transfer from ubiquinol to cytochrome c, linking this redox reaction to translocation of protons across the mitochondrial inner membrane, with protons being carried across the membrane as hydrogens on the quinol. In the process called Q cycle, 2 protons are consumed from the matrix, 4 protons are released into the intermembrane space and 2 electrons are passed to cytochrome c. Cytochrome c1 is a catalytic core subunit containing a c-type heme. It transfers electrons from the [2Fe-2S] iron-sulfur cluster of the Rieske protein to cytochrome c. The sequence is that of Cytochrome c1 2, heme protein, mitochondrial (CYC1-2) from Arabidopsis thaliana (Mouse-ear cress).